The following is a 230-amino-acid chain: Ribonuclease 3 (230 aa).

In terms of domain architecture, RNase III spans 5–127 (HEHLARKLGI…ILGAVLRDQG (123 aa)). E40 lines the Mg(2+) pocket. D44 is a catalytic residue. 2 residues coordinate Mg(2+): D113 and E116. E116 is a catalytic residue. In terms of domain architecture, DRBM spans 154 to 224 (DPKTRLQELM…AENMLSRLSD (71 aa)). Residues 202 to 230 (GEGSSRKKAEQQAAENMLSRLSDQSRFRV) are disordered.

This sequence belongs to the ribonuclease III family. In terms of assembly, homodimer. Mg(2+) is required as a cofactor.

The protein resides in the cytoplasm. The enzyme catalyses Endonucleolytic cleavage to 5'-phosphomonoester.. Its function is as follows. Digests double-stranded RNA. Involved in the processing of primary rRNA transcript to yield the immediate precursors to the large and small rRNAs (23S and 16S). Processes some mRNAs, and tRNAs when they are encoded in the rRNA operon. Processes pre-crRNA and tracrRNA of type II CRISPR loci if present in the organism. This Methylococcus capsulatus (strain ATCC 33009 / NCIMB 11132 / Bath) protein is Ribonuclease 3.